A 711-amino-acid polypeptide reads, in one-letter code: MLNPIVRKFQYGQHTVTLETGMMARQATAAVMVSMDDTAVFVTVVGQKKAKPGQDFFPLTVNYQERTYAAGRIPGSFFRREGRPSEGETLIARLIDRPIRPLFPEGFVNEVQVIATVVSVNPQVNPDIVAMIGASAALSLSGIPFNGPIGAARVGYINDQYVLNPTQDELKESKLDLVVAGTEAAVLMVESEAQLLSEDQMLGAVVFGHEQQQVVIQNINELVKEAGKPRWDWQPEPVNEALNARVAALAEARLSDAYRITDKQERYAQVDVIKSETIATLLAEDETLDENELGEILHAIEKNVVRSRVLAGEPRIDGREKDMIRGLDVRTGVLPRTHGSALFTRGETQALVTATLGTARDAQVLDELMGERTDTFLFHYNFPPYSVGETGMVGSPKRREIGHGRLAKRGVLAVMPDMDKFPYTVRVVSEITESNGSSSMASVCGASLALMDAGVPIKAAVAGIAMGLVKEGDNYVVLSDILGDEDHLGDMDFKVAGSRDGISALQMDIKIEGITKEIMQVALNQAKGARLHILGVMEQAINAPRGDISEFAPRIHTIKINPDKIKDVIGKGGSVIRALTEETGTTIEIEDDGTVKIAATDGEKAKHAIRRIEEITAEIEVGRVYTGKVTRIVDFGAFVAIGGGKEGLVHISQIADKRVEKVTDYLQMGQEVPVKVLEVDRQGRIRLSIKEATEQSQPAAAPEAPAAEQGE.

The tract at residues 77–80 (FFRR) is FFRR loop; important for RNA binding. Residues 327–331 (LDVRT) are interaction with RNase E. Mg(2+)-binding residues include Asp486 and Asp492. The KH domain occupies 553 to 612 (PRIHTIKINPDKIKDVIGKGGSVIRALTEETGTTIEIEDDGTVKIAATDGEKAKHAIRRI). Positions 622–690 (GRVYTGKVTR…RQGRIRLSIK (69 aa)) constitute an S1 motif domain. The disordered stretch occupies residues 689–711 (IKEATEQSQPAAAPEAPAAEQGE). Residues 694 to 711 (EQSQPAAAPEAPAAEQGE) show a composition bias toward low complexity.

Belongs to the polyribonucleotide nucleotidyltransferase family. As to quaternary structure, component of the RNA degradosome, which is a multiprotein complex involved in RNA processing and mRNA degradation. Interacts with RNase E (rne). Homotrimer. The homotrimer forms a ring-like structure with a central channel, where RNA molecules can bind. RNA molecules bind between neighboring subunits. Might interact with YicC. Mg(2+) is required as a cofactor. Mn(2+) serves as cofactor.

The protein localises to the cytoplasm. The enzyme catalyses RNA(n+1) + phosphate = RNA(n) + a ribonucleoside 5'-diphosphate. Its function is as follows. Involved in mRNA degradation. Catalyzes the phosphorolysis of single-stranded polyribonucleotides processively in the 3'- to 5'-direction. Also involved, along with RNase II, in tRNA processing. RNases II and R contribute to rRNA degradation during starvation, while RNase R and PNPase are the major contributors to quality control of rRNA during steady state growth. Contributes to degradation of some small RNAs (sRNA). The chain is Polyribonucleotide nucleotidyltransferase from Escherichia coli (strain K12).